Reading from the N-terminus, the 244-residue chain is Small ribosomal subunit protein uS3 (244 aa).

The KH type-2 domain occupies 39-110 (IRDYVRKNLS…QIRINVIEVE (72 aa)). The disordered stretch occupies residues 215-244 (EDAAPSNVGQPRRRNQQRRRQQFEDRSNEG). Residues 225–234 (PRRRNQQRRR) are compositionally biased toward basic residues. The segment covering 235–244 (QQFEDRSNEG) has biased composition (basic and acidic residues).

The protein belongs to the universal ribosomal protein uS3 family. As to quaternary structure, part of the 30S ribosomal subunit. Forms a tight complex with proteins S10 and S14.

Binds the lower part of the 30S subunit head. Binds mRNA in the 70S ribosome, positioning it for translation. The polypeptide is Small ribosomal subunit protein uS3 (Synechococcus sp. (strain ATCC 27144 / PCC 6301 / SAUG 1402/1) (Anacystis nidulans)).